The chain runs to 273 residues: 3-methyl-2-oxobutanoate hydroxymethyltransferase (273 aa).

Mg(2+) is bound by residues Asp-53 and Asp-92. Residues 53–54 (DS), Asp-92, and Lys-120 each bind 3-methyl-2-oxobutanoate. A Mg(2+)-binding site is contributed by Glu-122. Catalysis depends on Glu-189, which acts as the Proton acceptor.

This sequence belongs to the PanB family. Homodecamer; pentamer of dimers. It depends on Mg(2+) as a cofactor.

The protein resides in the cytoplasm. It carries out the reaction 3-methyl-2-oxobutanoate + (6R)-5,10-methylene-5,6,7,8-tetrahydrofolate + H2O = 2-dehydropantoate + (6S)-5,6,7,8-tetrahydrofolate. It participates in cofactor biosynthesis; (R)-pantothenate biosynthesis; (R)-pantoate from 3-methyl-2-oxobutanoate: step 1/2. Its function is as follows. Catalyzes the reversible reaction in which hydroxymethyl group from 5,10-methylenetetrahydrofolate is transferred onto alpha-ketoisovalerate to form ketopantoate. The sequence is that of 3-methyl-2-oxobutanoate hydroxymethyltransferase from Cupriavidus necator (strain ATCC 17699 / DSM 428 / KCTC 22496 / NCIMB 10442 / H16 / Stanier 337) (Ralstonia eutropha).